Reading from the N-terminus, the 376-residue chain is uncharacterized protein (376 aa).

Belongs to the glycosyltransferase 28 family.

This is an uncharacterized protein from Methanosarcina mazei (strain ATCC BAA-159 / DSM 3647 / Goe1 / Go1 / JCM 11833 / OCM 88) (Methanosarcina frisia).